The chain runs to 146 residues: Large ribosomal subunit protein uL15 (146 aa).

Positions 1–42 are disordered; sequence MTIKLHDLQPARGSKTTRTRVGRGEASKGKTAGRGTKGTKAR.

It belongs to the universal ribosomal protein uL15 family. As to quaternary structure, part of the 50S ribosomal subunit.

Functionally, binds to the 23S rRNA. The polypeptide is Large ribosomal subunit protein uL15 (Mycobacterium leprae (strain Br4923)).